A 54-amino-acid chain; its full sequence is VTSYTLNEVVPLKDVVPEWVRIGFSATTGAEFAAHEVLSWSFHSELGETSASKQ.

The protein belongs to the leguminous lectin family. Tetramer of two alpha and two beta chains.

The sequence is that of Lectin alpha-1 chain from Lathyrus cicera (Flat-pod pea).